A 247-amino-acid chain; its full sequence is Ribonuclease 3 (247 aa).

The region spanning 21 to 149 (LQKLSKKIGI…LVGAIYLDQG (129 aa)) is the RNase III domain. Glu-62 contributes to the Mg(2+) binding site. Residue Asp-66 is part of the active site. Mg(2+)-binding residues include Asn-135 and Glu-138. Glu-138 is an active-site residue. The 70-residue stretch at 176 to 245 (DYKTQLQEYS…AKELYNRIRK (70 aa)) folds into the DRBM domain.

The protein belongs to the ribonuclease III family. In terms of assembly, homodimer. It depends on Mg(2+) as a cofactor.

The protein resides in the cytoplasm. The catalysed reaction is Endonucleolytic cleavage to 5'-phosphomonoester.. In terms of biological role, digests double-stranded RNA. Involved in the processing of primary rRNA transcript to yield the immediate precursors to the large and small rRNAs (23S and 16S). Processes some mRNAs, and tRNAs when they are encoded in the rRNA operon. Processes pre-crRNA and tracrRNA of type II CRISPR loci if present in the organism. In Leptospira interrogans serogroup Icterohaemorrhagiae serovar copenhageni (strain Fiocruz L1-130), this protein is Ribonuclease 3.